The chain runs to 573 residues: Sulfite reductase [NADPH] hemoprotein beta-component (573 aa).

The [4Fe-4S] cluster site is built by C436, C442, C481, and C485. A siroheme-binding site is contributed by C485.

Belongs to the nitrite and sulfite reductase 4Fe-4S domain family. As to quaternary structure, alpha(8)-beta(8). The alpha component is a flavoprotein, the beta component is a hemoprotein. Requires siroheme as cofactor. [4Fe-4S] cluster is required as a cofactor.

It catalyses the reaction hydrogen sulfide + 3 NADP(+) + 3 H2O = sulfite + 3 NADPH + 4 H(+). It functions in the pathway sulfur metabolism; hydrogen sulfide biosynthesis; hydrogen sulfide from sulfite (NADPH route): step 1/1. Component of the sulfite reductase complex that catalyzes the 6-electron reduction of sulfite to sulfide. This is one of several activities required for the biosynthesis of L-cysteine from sulfate. In Alteromonas mediterranea (strain DSM 17117 / CIP 110805 / LMG 28347 / Deep ecotype), this protein is Sulfite reductase [NADPH] hemoprotein beta-component.